Reading from the N-terminus, the 147-residue chain is D-aminoacyl-tRNA deacylase (147 aa).

The short motif at 136–137 (GP) is the Gly-cisPro motif, important for rejection of L-amino acids element.

The protein belongs to the DTD family. In terms of assembly, homodimer.

It is found in the cytoplasm. The catalysed reaction is glycyl-tRNA(Ala) + H2O = tRNA(Ala) + glycine + H(+). It carries out the reaction a D-aminoacyl-tRNA + H2O = a tRNA + a D-alpha-amino acid + H(+). Its function is as follows. An aminoacyl-tRNA editing enzyme that deacylates mischarged D-aminoacyl-tRNAs. Also deacylates mischarged glycyl-tRNA(Ala), protecting cells against glycine mischarging by AlaRS. Acts via tRNA-based rather than protein-based catalysis; rejects L-amino acids rather than detecting D-amino acids in the active site. By recycling D-aminoacyl-tRNA to D-amino acids and free tRNA molecules, this enzyme counteracts the toxicity associated with the formation of D-aminoacyl-tRNA entities in vivo and helps enforce protein L-homochirality. This is D-aminoacyl-tRNA deacylase from Streptococcus pneumoniae (strain P1031).